The sequence spans 478 residues: Probable sodium/glutamine symporter GlnT (478 aa).

10 helical membrane-spanning segments follow: residues 14–34 (DLLW…YFTF), 85–105 (IAIA…IIAI), 145–165 (WMGA…FNSV), 185–205 (LGLI…KRIA), 211–231 (IVVV…FSNI), 236–256 (GVLA…GGAL), 298–318 (AFGV…IILF), 342–362 (GSWA…CALI), 381–401 (LIFV…VAKV), and 411–431 (FMGL…KVVF).

The protein belongs to the alanine or glycine:cation symporter (AGCS) (TC 2.A.25) family.

Its subcellular location is the cell membrane. Functionally, probably functions as a sodium/glutamine symporter for glutamine uptake. In Bacillus subtilis (strain 168), this protein is Probable sodium/glutamine symporter GlnT (glnT).